Here is a 1250-residue protein sequence, read N- to C-terminus: Immunoglobulin superfamily DCC subclass member 4 (1250 aa).

Residues Met-1–Gly-24 form the signal peptide. At Glu-25–Thr-957 the chain is on the extracellular side. Ig-like C2-type domains are found at residues Pro-29 to Val-137, Ala-143 to Ser-229, Gln-242 to Arg-330, and Pro-335 to Ala-421. A disulfide bond links Cys-57 and Cys-121. Asn-90, Asn-102, and Asn-157 each carry an N-linked (GlcNAc...) asparagine glycan. The cysteines at positions 164 and 212 are disulfide-linked. A glycan (N-linked (GlcNAc...) asparagine) is linked at Asn-252. Cystine bridges form between Cys-265–Cys-312 and Cys-356–Cys-405. 5 consecutive Fibronectin type-III domains span residues Ala-431–Asp-525, Pro-527–Met-623, Ala-632–Pro-741, Pro-752–Asp-845, and Pro-850–Glu-945. Residue Asn-582 is glycosylated (N-linked (GlcNAc...) asparagine). A helical transmembrane segment spans residues Gly-958–Leu-978. Topologically, residues Arg-979 to Ala-1250 are cytoplasmic. Position 995 is a phosphothreonine (Thr-995). Disordered regions lie at residues Ser-1140–Gln-1175 and Pro-1215–Ala-1250.

It belongs to the immunoglobulin superfamily. DCC family.

The protein localises to the cell membrane. This chain is Immunoglobulin superfamily DCC subclass member 4 (IGDCC4), found in Homo sapiens (Human).